A 263-amino-acid chain; its full sequence is Lens fiber major intrinsic protein (263 aa).

At 1–9 (MWELRSASF) the chain is on the cytoplasmic side. The helical transmembrane segment at 10–29 (WRAIFAEFFATLFYVFFGLG) threads the bilayer. The Extracellular segment spans residues 30–41 (ASLRWTPGPLHV). A helical membrane pass occupies residues 42-59 (LQVALAFGLALATLVQAV). Residues 60 to 61 (GH) are Cytoplasmic-facing. The discontinuously helical intramembrane region spans 62 to 77 (ISGAHVNPAVTFAFLV). Positions 68-70 (NPA) match the NPA 1 motif. Residues 78-82 (GSQMS) lie on the Cytoplasmic side of the membrane. The chain crosses the membrane as a helical span at residues 83–106 (LLRAFCYMAAQLLGAVAGAAVLYS). At 107–127 (VTPPAVRGNLALNTLHPGVSV) the chain is on the extracellular side. Residues 128–148 (GQATTVEIFLTLQFVLCIFAT) form a helical membrane-spanning segment. The Cytoplasmic portion of the chain corresponds to 149 to 156 (YDERRNGR). A helical membrane pass occupies residues 157–175 (LGSVALAVGFSLTLGHLFG). The Extracellular portion of the chain corresponds to 176-178 (MYY). The discontinuously helical intramembrane region spans 179-193 (TGAGMNPARSFAPAI). The short motif at 184–186 (NPA) is the NPA 2 element. Residues 194 to 200 (LTRNFTN) are Extracellular-facing. Residues 201–222 (HWVYWVGPIIGGGLGSLLYDFL) form a helical membrane-spanning segment. Topologically, residues 223-263 (LFPRLKSVSERLSILKGARPSDSNGQPEGTGEPVELKTQAL) are cytoplasmic. An interaction with CALM region spans residues 227-237 (LKSVSERLSIL). 3 positions are modified to phosphoserine: serine 235, serine 243, and serine 245. The segment at 240 to 263 (ARPSDSNGQPEGTGEPVELKTQAL) is disordered. Residue asparagine 246 is modified to Deamidated asparagine.

The protein belongs to the MIP/aquaporin (TC 1.A.8) family. Homotetramer; each monomer provides an independent water pore. Two homotetramers on opposing membranes can dimerize, forming a cell-cell junction. Interacts with CALM; the calcium-calmodulin/CALM complex interacts with the cytoplasmic domains of two aquaporins, leading to channel closure. Interacts with BFSP1 (via C-terminus); prevents calcium-dependent inhibition of the water channel activity. In terms of processing, subject to partial proteolytic cleavage in the eye lens core. Partial proteolysis promotes interactions between tetramers from adjoining membranes. Post-translationally, fatty acylated at Met-1 and Lys-238. The acyl modifications, in decreasing order of ion abundance, are: oleoyl (C18:1) &gt; palmitoyl (C16:0) &gt; stearoyl (C18:0) &gt; eicosenoyl (C20:1) &gt; dihomo-gamma-linolenoyl (C20:3) &gt; palmitoleoyl (C16:1) &gt; eicosadienoyl (C20:2).

It localises to the cell membrane. The protein resides in the cell junction. The enzyme catalyses H2O(in) = H2O(out). With respect to regulation, the water channel activity is inhibited by calcium through calmodulin/CALM. Functionally, aquaporins form homotetrameric transmembrane channels, with each monomer independently mediating water transport across the plasma membrane along its osmotic gradient. Specifically expressed in lens fiber cells, this aquaporin is crucial for maintaining lens water homeostasis and transparency. Beyond water permeability, it also acts as a cell-to-cell adhesion molecule, forming thin junctions between lens fiber cells that are essential for maintaining the ordered structure and transparency of the lens. The polypeptide is Lens fiber major intrinsic protein (Canis lupus familiaris (Dog)).